Here is a 499-residue protein sequence, read N- to C-terminus: Probable cytosol aminopeptidase (499 aa).

Mn(2+) contacts are provided by K271 and D276. K283 is an active-site residue. The Mn(2+) site is built by D294, D353, and E355. Residue R357 is part of the active site.

This sequence belongs to the peptidase M17 family. It depends on Mn(2+) as a cofactor.

It is found in the cytoplasm. The enzyme catalyses Release of an N-terminal amino acid, Xaa-|-Yaa-, in which Xaa is preferably Leu, but may be other amino acids including Pro although not Arg or Lys, and Yaa may be Pro. Amino acid amides and methyl esters are also readily hydrolyzed, but rates on arylamides are exceedingly low.. It catalyses the reaction Release of an N-terminal amino acid, preferentially leucine, but not glutamic or aspartic acids.. In terms of biological role, presumably involved in the processing and regular turnover of intracellular proteins. Catalyzes the removal of unsubstituted N-terminal amino acids from various peptides. The protein is Probable cytosol aminopeptidase of Bordetella bronchiseptica (strain ATCC BAA-588 / NCTC 13252 / RB50) (Alcaligenes bronchisepticus).